The primary structure comprises 194 residues: Probable chorismate pyruvate-lyase (194 aa).

Arg-77, Leu-115, and Glu-176 together coordinate substrate.

Belongs to the UbiC family.

The protein localises to the cytoplasm. The catalysed reaction is chorismate = 4-hydroxybenzoate + pyruvate. It participates in cofactor biosynthesis; ubiquinone biosynthesis. Its function is as follows. Removes the pyruvyl group from chorismate, with concomitant aromatization of the ring, to provide 4-hydroxybenzoate (4HB) for the ubiquinone pathway. This Cupriavidus pinatubonensis (strain JMP 134 / LMG 1197) (Cupriavidus necator (strain JMP 134)) protein is Probable chorismate pyruvate-lyase.